The sequence spans 150 residues: Interleukin-17A (150 aa).

A signal peptide spans 1-17 (MCLMLLLLLNLEATVKA). The interval 54 to 75 (SSRRPSDYLNRSTSPWTLSRNE) is disordered. The segment covering 62–72 (LNRSTSPWTLS) has biased composition (polar residues). N-linked (GlcNAc...) asparagine glycosylation is present at N63. 2 cysteine pairs are disulfide-bonded: C89–C139 and C94–C141.

Belongs to the IL-17 family. Homodimer. Forms complexes with IL17RA and IL17RC receptors with 2:1 binding stoichiometry: two receptor chains for one interleukin molecule. IL17A homodimer preferentially drives the formation of IL17RA-IL17RC heterodimeric receptor complex. IL17A homodimer adopts an asymmetrical ternary structure with one IL17RA molecule, allowing for high affinity interactions of one IL17A monomer with one IL17RA molecule (via D1 and D2 domains), while disfavoring binding of a second IL17RA molecule on the other IL17A monomer. Heterodimer with IL17F. IL17A-IL17F forms complexes with IL17RA-IL17RC, but with lower affinity when compared to IL17A homodimer. IL17RA and IL17RC chains cannot distinguish between IL17A and IL17F molecules, potentially enabling the formation of topologically distinct complexes.

The protein resides in the secreted. In terms of biological role, effector cytokine of innate and adaptive immune system involved in antimicrobial host defense and maintenance of tissue integrity. Signals via IL17RA-IL17RC heterodimeric receptor complex, triggering homotypic interaction of IL17RA and IL17RC chains with TRAF3IP2 adapter. This leads to downstream TRAF6-mediated activation of NF-kappa-B and MAPkinase pathways ultimately resulting in transcriptional activation of cytokines, chemokines, antimicrobial peptides and matrix metalloproteinases, with potential strong immune inflammation. Plays an important role in connecting T cell-mediated adaptive immunity and acute inflammatory response to destroy extracellular bacteria and fungi. As a signature effector cytokine of T-helper 17 cells (Th17), primarily induces neutrophil activation and recruitment at infection and inflammatory sites. In airway epithelium, mediates neutrophil chemotaxis via induction of CXCL1 and CXCL5 chemokines. In secondary lymphoid organs, contributes to germinal center formation by regulating the chemotactic response of B cells to CXCL12 and CXCL13, enhancing retention of B cells within the germinal centers, B cell somatic hypermutation rate and selection toward plasma cells. Effector cytokine of a subset of gamma-delta T cells that functions as part of an inflammatory circuit downstream IL1B, TLR2 and IL23A-IL12B to promote neutrophil recruitment for efficient bacterial clearance. Effector cytokine of innate immune cells including invariant natural killer cell (iNKT) and group 3 innate lymphoid cells that mediate initial neutrophilic inflammation. Involved in the maintenance of the integrity of epithelial barriers during homeostasis and pathogen infection. Upon acute injury, has a direct role in epithelial barrier formation by regulating OCLN localization and tight junction biogenesis. As part of the mucosal immune response induced by commensal bacteria, enhances host's ability to resist pathogenic bacterial and fungal infections by promoting neutrophil recruitment and antimicrobial peptides release. In synergy with IL17F, mediates the production of antimicrobial beta-defensins DEFB1, DEFB103A, and DEFB104A by mucosal epithelial cells, limiting the entry of microbes through the epithelial barriers. Involved in antiviral host defense through various mechanisms. The sequence is that of Interleukin-17A (Il17a) from Rattus norvegicus (Rat).